The following is a 331-amino-acid chain: Aspartate carbamoyltransferase catalytic subunit (331 aa).

Residues Arg55 and Thr56 each coordinate carbamoyl phosphate. Lys84 is a binding site for L-aspartate. Residues Arg105, His133, and Gln136 each contribute to the carbamoyl phosphate site. L-aspartate-binding residues include Arg166 and Arg229. Carbamoyl phosphate is bound by residues Leu268 and Pro269.

It belongs to the aspartate/ornithine carbamoyltransferase superfamily. ATCase family. In terms of assembly, heterododecamer (2C3:3R2) of six catalytic PyrB chains organized as two trimers (C3), and six regulatory PyrI chains organized as three dimers (R2).

It catalyses the reaction carbamoyl phosphate + L-aspartate = N-carbamoyl-L-aspartate + phosphate + H(+). It functions in the pathway pyrimidine metabolism; UMP biosynthesis via de novo pathway; (S)-dihydroorotate from bicarbonate: step 2/3. Catalyzes the condensation of carbamoyl phosphate and aspartate to form carbamoyl aspartate and inorganic phosphate, the committed step in the de novo pyrimidine nucleotide biosynthesis pathway. This chain is Aspartate carbamoyltransferase catalytic subunit, found in Alkaliphilus oremlandii (strain OhILAs) (Clostridium oremlandii (strain OhILAs)).